Reading from the N-terminus, the 348-residue chain is Rhodopsin (348 aa).

Residue Met1 is modified to N-acetylmethionine. Residues 1 to 36 (MNGTEGPNFYVPFSNITGVVRSPFEQPQYYLAEPWQ) are Extracellular-facing. N-linked (GlcNAc...) asparagine glycosylation is found at Asn2 and Asn15. A helical transmembrane segment spans residues 37–61 (FSMLAAYMFLLIVLGFPINFLTLYV). Topologically, residues 62–73 (TVQHKKLRTPLN) are cytoplasmic. A helical transmembrane segment spans residues 74–96 (YILLNLAVADLFMVFGGFTTTLY). Residues 97-110 (TSLHGYFVFGPTGC) are Extracellular-facing. A disulfide bridge connects residues Cys110 and Cys187. Residues 111-133 (NLEGFFATLGGEIGLWSLVVLAI) form a helical membrane-spanning segment. Positions 134-136 (ERY) match the 'Ionic lock' involved in activated form stabilization motif. The Cytoplasmic portion of the chain corresponds to 134–152 (ERYVVVCKPMSNFRFGENH). Residues 153–173 (AIMGVAFTWVMALACAAPPLV) form a helical membrane-spanning segment. At 174–202 (GWSRYIPEGMQCSCGIDYYTLKPEVNNES) the chain is on the extracellular side. Glu201 contacts Zn(2+). A helical membrane pass occupies residues 203–224 (FVIYMFVVHFTIPMIVIFFCYG). The Cytoplasmic segment spans residues 225 to 252 (QLVFTVKEAAAQQQESATTQKAEKEVTR). The chain crosses the membrane as a helical span at residues 253–274 (MVIIMVIFFLICWLPYASVAMY). The Extracellular segment spans residues 275–286 (IFTHQGSNFGPI). Gln279 contacts Zn(2+). Residues 287 to 308 (FMTLPAFFAKTASIYNPIIYIM) form a helical membrane-spanning segment. Residue Lys296 is modified to N6-(retinylidene)lysine. Residues 309–348 (MNKQFRNCMLTSLCCGKNPLGDDEASATASKTETSQVAPA) lie on the Cytoplasmic side of the membrane. 2 S-palmitoyl cysteine lipidation sites follow: Cys322 and Cys323. The interval 330–348 (DDEASATASKTETSQVAPA) is interaction with SAG. Ser334 carries the phosphoserine modification. Thr336 is modified (phosphothreonine). At Ser338 the chain carries Phosphoserine. Phosphothreonine is present on residues Thr340 and Thr342. Phosphoserine is present on Ser343.

This sequence belongs to the G-protein coupled receptor 1 family. Opsin subfamily. In terms of assembly, homodimer. May form a complex composed of RHO, GRK1 and RCVRN in a Ca(2+)-dependent manner; RCVRN prevents the interaction between GRK1 and RHO. Interacts with GRK1. Interacts (phosphorylated form) with SAG. Interacts with GNAT1. Interacts with GNAT3. SAG and G-proteins compete for a common binding site. Interacts with PRCD; the interaction promotes PRCD stability. Forms a complex with ASAP1 and ARF4. Forms a complex with ASAP1, RAB11A, Rabin8/RAB3IP, ARF4 and RAB11FIP3; the complex regulates Golgi-to-cilia rhodopsin/RHO transport in photoreceptors. In terms of processing, phosphorylated on some or all of the serine and threonine residues present in the C-terminal region. Post-translationally, contains one covalently linked retinal chromophore. Upon light absorption, the covalently bound 11-cis-retinal is converted to all-trans-retinal. After hydrolysis of the Schiff base and release of the covalently bound all-trans-retinal, active rhodopsin is regenerated by binding of a fresh molecule of 11-cis-retinal.

It localises to the membrane. It is found in the cell projection. Its subcellular location is the cilium. The protein localises to the photoreceptor outer segment. Its function is as follows. Photoreceptor required for image-forming vision at low light intensity. Required for photoreceptor cell viability after birth. Light-induced isomerization of 11-cis to all-trans retinal triggers a conformational change that activates signaling via G-proteins. Subsequent receptor phosphorylation mediates displacement of the bound G-protein alpha subunit by the arrestin SAG and terminates signaling. This chain is Rhodopsin (Rho), found in Rattus norvegicus (Rat).